We begin with the raw amino-acid sequence, 182 residues long: Small ribosomal subunit protein uS9 (182 aa).

Belongs to the universal ribosomal protein uS9 family.

The chain is Small ribosomal subunit protein uS9 from Corynebacterium glutamicum (strain R).